The chain runs to 80 residues: Small ribosomal subunit protein uS17 (80 aa).

This sequence belongs to the universal ribosomal protein uS17 family. Part of the 30S ribosomal subunit.

Functionally, one of the primary rRNA binding proteins, it binds specifically to the 5'-end of 16S ribosomal RNA. The sequence is that of Small ribosomal subunit protein uS17 from Microcystis aeruginosa (strain NIES-843 / IAM M-2473).